A 58-amino-acid chain; its full sequence is Ranakinin-N (58 aa).

The signal sequence occupies residues 1 to 22 (MFTMKKSLLLLFFLGTISMSLC). The propeptide occupies 23 to 43 (EEKRDADEEETEGEAKMEDIK). The interval 25-58 (KRDADEEETEGEAKMEDIKRAEAVPPGFTPFRKP) is disordered. Residues 35–46 (GEAKMEDIKRAE) are compositionally biased toward basic and acidic residues.

Expressed by the skin glands.

Its subcellular location is the secreted. Its function is as follows. Induces contraction of intestinal smooth muscle in isolated guinea pig ileum. May induce relaxation of arterial smooth muscle. May target bradykinin receptors (BDKRB). Lacks antibacterial activity against the Gram-positive bacterium S.aureus and the Gram-negative bacteria E.coli and B.dysenteria, and antifungal activity against C.albicans. This chain is Ranakinin-N, found in Hylarana nigrovittata (Black-striped frog).